Consider the following 106-residue polypeptide: MQFFTVATLFLATAFAAPSVDTNGNGIAPRLAANFCPPGLLYSNPQCCQIDVLGVADLDCVSPPSGPSKCKTFAGICDKIGRQPKCCVVPVAGQALLCTDPVGANN.

The signal sequence occupies residues 1–16; sequence MQFFTVATLFLATAFA. Intrachain disulfides connect Cys-36/Cys-86, Cys-47/Cys-77, Cys-48/Cys-60, and Cys-87/Cys-98.

Belongs to the cerato-ulmin hydrophobin family. As to quaternary structure, homodimer. Homodimers further self-assemble to form highly ordered films at water-air interfaces through intermolecular interactions.

Its subcellular location is the secreted. It is found in the cell wall. In terms of biological role, aerial growth, conidiation, and dispersal of filamentous fungi in the environment rely upon a capability of their secreting small amphipathic proteins called hydrophobins (HPBs) with low sequence identity. Class I can self-assemble into an outermost layer of rodlet bundles on aerial cell surfaces, conferring cellular hydrophobicity that supports fungal growth, development and dispersal; whereas Class II form highly ordered films at water-air interfaces through intermolecular interactions but contribute nothing to the rodlet structure. HFB2-6 is a class II hydrophobin that has a function in root colonization. Acts as an effector in poplar by up-regulating the expression of genes related to both the jasmonic acid and salicylic acid signal transduction pathways, which not only causes induced systemic resistance (ISR), but also systemic acquired resistance (SAR), giving poplar broad-spectrum resistance to pathogens. Also induces genes related to auxin signal transduction to promote poplar growth. Plays roles in interactions with both biotic and abiotic environmental conditions such as the presence of the pathogen Alternaria alternata or nutrient starvation conditions. The protein is Class II hydrophobin 6 of Trichoderma asperellum (strain ATCC 204424 / CBS 433.97 / NBRC 101777).